The following is a 134-amino-acid chain: Complexin-1 (134 aa).

Disordered stretches follow at residues 1 to 60 and 74 to 113; these read MEFV…AERE and KKEE…EEED. Over residues 15–60 the composition is skewed to basic and acidic residues; the sequence is DMGKMLGGDEEKDPDAAKKEEERQEALRQAEEERKAKYAKMEAERE. Positions 29 to 69 form a coiled coil; sequence DAAKKEEERQEALRQAEEERKAKYAKMEAEREAVRQGIRDK. Residues 48–70 form an interaction with the SNARE complex region; it reads RKAKYAKMEAEREAVRQGIRDKY.

The protein belongs to the complexin/synaphin family. In terms of assembly, binds to the SNARE core complex containing SNAP25, VAMP2 and STX1A. As to expression, nervous system. In hippocampus and cerebellum, expressed mainly by inhibitory neurons. Overexpressed in substantia nigra from patients with Parkinson disease.

It localises to the cytoplasm. Its subcellular location is the cytosol. It is found in the perikaryon. The protein resides in the presynapse. In terms of biological role, positively regulates a late step in exocytosis of various cytoplasmic vesicles, such as synaptic vesicles and other secretory vesicles. Organizes the SNAREs into a cross-linked zigzag topology that, when interposed between the vesicle and plasma membranes, is incompatible with fusion, thereby preventing SNAREs from releasing neurotransmitters until an action potential arrives at the synapse. Also involved in glucose-induced secretion of insulin by pancreatic beta-cells. Essential for motor behavior. The polypeptide is Complexin-1 (CPLX1) (Homo sapiens (Human)).